Here is a 317-residue protein sequence, read N- to C-terminus: UV DNA damage endonuclease (317 aa).

This sequence belongs to the uve1/UvsE family.

In terms of biological role, component in a DNA repair pathway. Removal of UV LIGHT damaged nucleotides. Recognizes pyrimidine dimers and cleave a phosphodiester bond immediately 5' to the lesion. In Bacillus thuringiensis subsp. konkukian (strain 97-27), this protein is UV DNA damage endonuclease.